We begin with the raw amino-acid sequence, 331 residues long: Small ribosomal subunit protein uS2 (331 aa).

Belongs to the universal ribosomal protein uS2 family.

The protein is Small ribosomal subunit protein uS2 of Bradyrhizobium diazoefficiens (strain JCM 10833 / BCRC 13528 / IAM 13628 / NBRC 14792 / USDA 110).